We begin with the raw amino-acid sequence, 209 residues long: Thymidine kinase (209 aa).

ATP contacts are provided by residues 16-23 (GPMFAGKT) and 90-93 (DESQ). The Proton acceptor role is filled by Glu91.

This sequence belongs to the thymidine kinase family. As to quaternary structure, homotetramer.

The protein localises to the cytoplasm. It catalyses the reaction thymidine + ATP = dTMP + ADP + H(+). This Aster yellows witches'-broom phytoplasma (strain AYWB) protein is Thymidine kinase.